The chain runs to 775 residues: Melanoma-associated antigen D1 (775 aa).

The interval 37–330 (SEAPPTSQAT…PARQTPSAWQ (294 aa)) is disordered. The span at 39 to 50 (APPTSQATAAAS) shows a compositional bias: low complexity. 6 stretches are compositionally biased toward polar residues: residues 52–63 (PNASPQSSQPPT), 84–100 (KAQN…SQAR), 150–180 (GQNT…NQPK), 223–237 (AQTS…NVES), 250–260 (NNLNVEENSNG), and 297–330 (LAWQ…SAWQ). 19 repeat units span residues 293-298 (WQTPLA), 299-304 (WQNPSG), 305-310 (WQNQTA), 329-334 (WQNPVA), 335-340 (WQNPVI), 341-346 (WPNPVI), 347-352 (WQNPVI), 353-358 (WPNPIV), 359-364 (WPGPIV), 365-370 (WPNPMA), 371-376 (WQSTPG), 377-382 (WQSPPS), 383-388 (WQAPPS), 389-394 (WQSPQD), 395-400 (WQGPPD), 401-406 (WQLPPD), 407-412 (WSMPPD), 413-418 (WSFPSD), and 419-424 (WPFPPD). Positions 293 to 441 (WQTPLAWQNP…IPPDWQNLRP (149 aa)) are 22 X 6 AA tandem repeats of W-[PQ]-X-P-X-X. Residues 374–407 (TPGWQSPPSWQAPPSWQSPQDWQGPPDWQLPPDW) are disordered. Low complexity predominate over residues 375 to 406 (PGWQSPPSWQAPPSWQSPQDWQGPPDWQLPPD). The 20; approximate repeat unit spans residues 425-429 (WIPAD). 2 repeat units span residues 430 to 435 (WPIPPD) and 436 to 441 (WQNLRP). The span at 437–452 (QNLRPSPNLRSSPNSR) shows a compositional bias: low complexity. A disordered region spans residues 437-463 (QNLRPSPNLRSSPNSRASQNQGPPQPR). An MAGE domain is found at 468–666 (LQERANKLVK…RDWTAQFMEA (199 aa)).

Interacts with DLX5, DLX7 and MSX2 and forms homomultimers. Interacts with UNC5A. Interacts with TRIM28 and PJA1. Interacts with NGFR/p75NTR and RORA. In terms of tissue distribution, ubiquitous and in the seminiferous tubules expressed in Sertoli cells but not in germ cells. Expression decreases in all tissues with increased age and is detectable only in brain cortex and lung.

The protein localises to the cytoplasm. The protein resides in the cell membrane. It is found in the nucleus. In terms of biological role, involved in the apoptotic response after nerve growth factor (NGF) binding in neuronal cells. Inhibits cell cycle progression, and facilitates NGFR-mediated apoptosis. May act as a regulator of the function of DLX family members. May enhance ubiquitin ligase activity of RING-type zinc finger-containing E3 ubiquitin-protein ligases. Proposed to act through recruitment and/or stabilization of the Ubl-conjugating enzyme (E2) at the E3:substrate complex. Plays a role in the circadian rhythm regulation. May act as RORA co-regulator, modulating the expression of core clock genes such as BMAL1 and NFIL3, induced, or NR1D1, repressed. The protein is Melanoma-associated antigen D1 (Maged1) of Rattus norvegicus (Rat).